A 295-amino-acid chain; its full sequence is Pyridoxal 5'-phosphate synthase subunit PdxS (295 aa).

D25 contributes to the D-ribose 5-phosphate binding site. The Schiff-base intermediate with D-ribose 5-phosphate role is filled by K82. Residue G154 participates in D-ribose 5-phosphate binding. Residue R166 participates in D-glyceraldehyde 3-phosphate binding. Residues G215 and 236–237 (GS) each bind D-ribose 5-phosphate.

It belongs to the PdxS/SNZ family. In the presence of PdxT, forms a dodecamer of heterodimers.

The catalysed reaction is aldehydo-D-ribose 5-phosphate + D-glyceraldehyde 3-phosphate + L-glutamine = pyridoxal 5'-phosphate + L-glutamate + phosphate + 3 H2O + H(+). The protein operates within cofactor biosynthesis; pyridoxal 5'-phosphate biosynthesis. Functionally, catalyzes the formation of pyridoxal 5'-phosphate from ribose 5-phosphate (RBP), glyceraldehyde 3-phosphate (G3P) and ammonia. The ammonia is provided by the PdxT subunit. Can also use ribulose 5-phosphate and dihydroxyacetone phosphate as substrates, resulting from enzyme-catalyzed isomerization of RBP and G3P, respectively. This Listeria welshimeri serovar 6b (strain ATCC 35897 / DSM 20650 / CCUG 15529 / CIP 8149 / NCTC 11857 / SLCC 5334 / V8) protein is Pyridoxal 5'-phosphate synthase subunit PdxS.